The sequence spans 54 residues: Low temperature-induced protein lt101.2 (54 aa).

2 consecutive transmembrane segments (helical) span residues 2 to 22 (ASAT…GVFL) and 34 to 54 (LLLT…VLVA).

It belongs to the UPF0057 (PMP3) family.

The protein localises to the membrane. This chain is Low temperature-induced protein lt101.2 (LT101.2), found in Hordeum vulgare (Barley).